A 72-amino-acid polypeptide reads, in one-letter code: Translation initiation factor IF-1 (72 aa).

The S1-like domain occupies 1–72; the sequence is MSKDDVIQMQ…SRARIVFRAK (72 aa).

This sequence belongs to the IF-1 family. As to quaternary structure, component of the 30S ribosomal translation pre-initiation complex which assembles on the 30S ribosome in the order IF-2 and IF-3, IF-1 and N-formylmethionyl-tRNA(fMet); mRNA recruitment can occur at any time during PIC assembly.

The protein localises to the cytoplasm. One of the essential components for the initiation of protein synthesis. Stabilizes the binding of IF-2 and IF-3 on the 30S subunit to which N-formylmethionyl-tRNA(fMet) subsequently binds. Helps modulate mRNA selection, yielding the 30S pre-initiation complex (PIC). Upon addition of the 50S ribosomal subunit IF-1, IF-2 and IF-3 are released leaving the mature 70S translation initiation complex. This is Translation initiation factor IF-1 from Methylibium petroleiphilum (strain ATCC BAA-1232 / LMG 22953 / PM1).